Reading from the N-terminus, the 522-residue chain is BAR/IMD domain-containing adapter protein 2-like 2 (522 aa).

An IMD domain is found at 1-239 (MAPEMDQFYR…HSPGLLGPAL (239 aa)). Disordered regions lie at residues 220–325 (SEAS…GGGG) and 404–502 (PMSP…GTNP). A phosphoserine mark is found at serine 231, serine 272, and serine 303. Residues 297–317 (RTPSASSLYASSTQRSRSNSF) are compositionally biased toward polar residues. The SH3 domain occupies 324–387 (GGARRVRALV…PEAYVKPVEE (64 aa)). Low complexity predominate over residues 443 to 456 (SQSRSRTPSRVPSR). The segment covering 457–466 (APSPAPPPLP) has biased composition (pro residues). 2 positions are modified to phosphoserine: serine 472 and serine 475.

Expressed in the epithelial layer of the intestine and in the kidney.

It localises to the cell membrane. It is found in the cell junction. The protein resides in the cytoplasmic vesicle membrane. Phosphoinositides-binding protein that induces the formation of planar or gently curved membrane structures. Binds to phosphoinositides, including to phosphatidylinositol 4,5-bisphosphate (PtdIns(4,5)P2) headgroups. There seems to be no clear preference for a specific phosphoinositide. This is BAR/IMD domain-containing adapter protein 2-like 2 (Baiap2l2) from Mus musculus (Mouse).